A 64-amino-acid chain; its full sequence is H/ACA ribonucleoprotein complex subunit 3-like protein (64 aa).

The protein belongs to the NOP10 family. Component of the small nucleolar ribonucleoprotein particles containing H/ACA-type snoRNAs (H/ACA snoRNPs).

It localises to the nucleus. The protein resides in the nucleolus. Functionally, required for ribosome biogenesis. Part of a complex which catalyzes pseudouridylation of rRNA. This involves the isomerization of uridine such that the ribose is subsequently attached to C5, instead of the normal N1. Pseudouridine ('psi') residues may serve to stabilize the conformation of rRNAs. The sequence is that of H/ACA ribonucleoprotein complex subunit 3-like protein from Arabidopsis thaliana (Mouse-ear cress).